Consider the following 352-residue polypeptide: Ion-translocating oxidoreductase complex subunit D (352 aa).

4 helical membrane-spanning segments follow: residues 20 to 40 (IMLLVVIAALPGIAAQTWFFG), 42 to 62 (GTLFQIVLAAITALVAEAIVL), 69 to 91 (VASHLQDYSALLTGLLLAVSIPP), and 123 to 143 (PAMIGYVVLLISFPVQMTSWL). The residue at position 187 (Thr-187) is an FMN phosphoryl threonine. The next 5 membrane-spanning stretches (helical) occupy residues 215–235 (LAGVGWQWVNLAWLVGGVFLL), 242–262 (WHIPVSFLLTLALCAALGWLF), 267–287 (LASPQLHLLSGATMLGAFFIL), 301–321 (LIFGALAGVLVWLIRSFGGYP), and 322–342 (DGVAFAVLLANITVPLIDYYT).

It belongs to the NqrB/RnfD family. In terms of assembly, the complex is composed of six subunits: RsxA, RsxB, RsxC, RsxD, RsxE and RsxG. Requires FMN as cofactor.

The protein localises to the cell inner membrane. Part of a membrane-bound complex that couples electron transfer with translocation of ions across the membrane. Required to maintain the reduced state of SoxR. The sequence is that of Ion-translocating oxidoreductase complex subunit D from Salmonella agona (strain SL483).